Consider the following 345-residue polypeptide: Anthranilate phosphoribosyltransferase (345 aa).

5-phospho-alpha-D-ribose 1-diphosphate contacts are provided by residues Gly84, 87-88, Thr92, 94-97, 112-120, and Ser124; these read GD, NIST, and KHGNRSVSS. Position 84 (Gly84) interacts with anthranilate. Ser96 provides a ligand contact to Mg(2+). Asn115 contributes to the anthranilate binding site. Residue Arg170 participates in anthranilate binding. Residues Asp229 and Glu230 each contribute to the Mg(2+) site.

It belongs to the anthranilate phosphoribosyltransferase family. As to quaternary structure, homodimer. Mg(2+) serves as cofactor.

The catalysed reaction is N-(5-phospho-beta-D-ribosyl)anthranilate + diphosphate = 5-phospho-alpha-D-ribose 1-diphosphate + anthranilate. It functions in the pathway amino-acid biosynthesis; L-tryptophan biosynthesis; L-tryptophan from chorismate: step 2/5. Catalyzes the transfer of the phosphoribosyl group of 5-phosphorylribose-1-pyrophosphate (PRPP) to anthranilate to yield N-(5'-phosphoribosyl)-anthranilate (PRA). The polypeptide is Anthranilate phosphoribosyltransferase (Xanthomonas oryzae pv. oryzae (strain MAFF 311018)).